A 318-amino-acid chain; its full sequence is Quinolinate synthase (318 aa).

Residues His34 and Ser51 each coordinate iminosuccinate. Cys96 is a binding site for [4Fe-4S] cluster. Iminosuccinate contacts are provided by residues 122–124 (YIN) and Ser139. Residue Cys182 coordinates [4Fe-4S] cluster. Iminosuccinate is bound by residues 208–210 (HPE) and Thr225. Cys275 lines the [4Fe-4S] cluster pocket.

It belongs to the quinolinate synthase family. Type 2 subfamily. The cofactor is [4Fe-4S] cluster.

The protein resides in the cytoplasm. It carries out the reaction iminosuccinate + dihydroxyacetone phosphate = quinolinate + phosphate + 2 H2O + H(+). Its pathway is cofactor biosynthesis; NAD(+) biosynthesis; quinolinate from iminoaspartate: step 1/1. Functionally, catalyzes the condensation of iminoaspartate with dihydroxyacetone phosphate to form quinolinate. The polypeptide is Quinolinate synthase (Synechocystis sp. (strain ATCC 27184 / PCC 6803 / Kazusa)).